The sequence spans 288 residues: Eukaryotic translation initiation factor 3 subunit G (288 aa).

Residues 1 to 33 (MSRVANNRDWADDEDLEDSNELPQSTTTTNKDG) are disordered. Residues 11–20 (ADDEDLEDSN) show a composition bias toward acidic residues. The span at 21–33 (ELPQSTTTTNKDG) shows a compositional bias: polar residues. The 79-residue stretch at 208–286 (ATLRVTNVSE…LILRVEFAKK (79 aa)) folds into the RRM domain.

This sequence belongs to the eIF-3 subunit G family. In terms of assembly, component of the eukaryotic translation initiation factor 3 (eIF-3) complex.

Its subcellular location is the cytoplasm. RNA-binding component of the eukaryotic translation initiation factor 3 (eIF-3) complex, which is involved in protein synthesis of a specialized repertoire of mRNAs and, together with other initiation factors, stimulates binding of mRNA and methionyl-tRNAi to the 40S ribosome. The eIF-3 complex specifically targets and initiates translation of a subset of mRNAs involved in cell proliferation. This subunit can bind 18S rRNA. The sequence is that of Eukaryotic translation initiation factor 3 subunit G (tif35) from Sclerotinia sclerotiorum (strain ATCC 18683 / 1980 / Ss-1) (White mold).